The sequence spans 257 residues: Snake venom serine proteinase 11 (257 aa).

The first 18 residues, 1–18, serve as a signal peptide directing secretion; the sequence is MVLIRVLANLLILQLSYA. A propeptide spanning residues 19-24 is cleaved from the precursor; the sequence is QKSSEL. Positions 25-248 constitute a Peptidase S1 domain; the sequence is VVGGDECNIN…YTEWIQSIIT (224 aa). 6 disulfide bridges follow: cysteine 31-cysteine 162, cysteine 49-cysteine 65, cysteine 97-cysteine 255, cysteine 141-cysteine 209, cysteine 173-cysteine 188, and cysteine 199-cysteine 224. Residues histidine 64 and aspartate 109 each act as charge relay system in the active site. Asparagine 120 is a glycosylation site (N-linked (GlcNAc...) asparagine). The Charge relay system role is filled by serine 203.

This sequence belongs to the peptidase S1 family. Snake venom subfamily. Monomer. In terms of tissue distribution, expressed by the venom gland.

Its subcellular location is the secreted. Snake venom serine protease that may act in the hemostasis system of the prey. In Crotalus adamanteus (Eastern diamondback rattlesnake), this protein is Snake venom serine proteinase 11.